The following is a 332-amino-acid chain: Leucine carboxyl methyltransferase 1 (332 aa).

S-adenosyl-L-methionine-binding positions include arginine 71, glycine 96, aspartate 120, 169–170 (DL), and glutamate 196.

It belongs to the methyltransferase superfamily. LCMT family.

The enzyme catalyses [phosphatase 2A protein]-C-terminal L-leucine + S-adenosyl-L-methionine = [phosphatase 2A protein]-C-terminal L-leucine methyl ester + S-adenosyl-L-homocysteine. Its function is as follows. Methylates the carboxyl group of the C-terminal leucine residue of protein phosphatase 2A catalytic subunits to form alpha-leucine ester residues. The polypeptide is Leucine carboxyl methyltransferase 1 (Lcmt1) (Rattus norvegicus (Rat)).